The sequence spans 302 residues: Dehydrodolichyl diphosphate synthase 3 (302 aa).

Belongs to the UPP synthase family. Requires Mg(2+) as cofactor.

It functions in the pathway protein modification; protein glycosylation. Its function is as follows. Catalyzes cis-prenyl chain elongation to produce the polyprenyl backbone of dolichol, a glycosyl carrier-lipid required for the biosynthesis of several classes of glycoprotein. This is Dehydrodolichyl diphosphate synthase 3 from Arabidopsis thaliana (Mouse-ear cress).